The chain runs to 117 residues: Ig heavy chain V region G4 (117 aa).

A signal peptide spans 1–19; it reads MTHWLCFTLALVAVRGVLS. The segment at 20 to 49 is framework-1; it reads EIQLVESGGAIRKPGDSLRLSCKASGFTFS. Cysteine 41 and cysteine 115 are disulfide-bonded. The tract at residues 50–54 is complementarity-determining-1; that stretch reads DTWMA. Residues 55-68 form a framework-2 region; it reads WARQPPGKGLQWVG. Positions 69–85 are complementarity-determining-2; sequence EINGNSETIRYAPEVKG. The segment at 86–117 is framework-3; the sequence is RLTISRDNTQNLLFLQISSLKPEDTATYYCAR.

This chain is Ig heavy chain V region G4 (G4), found in Caiman crocodilus (Spectacled caiman).